The sequence spans 585 residues: Arginine--tRNA ligase (585 aa).

The 'HIGH' region motif lies at 127–137 (PNTNKPLHVGH).

This sequence belongs to the class-I aminoacyl-tRNA synthetase family. In terms of assembly, monomer.

The protein localises to the cytoplasm. It catalyses the reaction tRNA(Arg) + L-arginine + ATP = L-arginyl-tRNA(Arg) + AMP + diphosphate. The sequence is that of Arginine--tRNA ligase from Borrelia garinii subsp. bavariensis (strain ATCC BAA-2496 / DSM 23469 / PBi) (Borreliella bavariensis).